We begin with the raw amino-acid sequence, 388 residues long: MNLHEYQAKSLFAEYGLPVSEGFACDTAQEAVEAAGHIGGNLWVVKCQVHAGGRGKAGGVKVTGDKEEIRAFAEHWLGKNLVTYQTDEKGQPVAKILVESCTDIANELYLGAVVDRATRRVVFMASTEGGVEIEKVAEETPELIHTAIIDPLTGPQGYQARDLGFKLGLNPTQMKQFTKIFMGLATMFVDHDFALLEINPLVITTEGNLHCLDGKIGIDGNALYRQPKIKGMHDPSQDDAREAHAAKFELNYVALDGNVGCMVNGAGLAMGTMDIVNLHGGKPANFLDVGGGATKERVAEAFKIILSDSNVKAVLVNIFGGIVRCDMIAEGIIGAVKEVGVKVPVVVRLEGTNAELGREVLAKSGLDIIAATSLTDAAEQVVKAAEGK.

Residues 9 to 244 (KSLFAEYGLP…PSQDDAREAH (236 aa)) enclose the ATP-grasp domain. ATP contacts are provided by residues K46, 53–55 (GRG), E99, T102, and E107. 2 residues coordinate Mg(2+): N199 and D213. Residues N264 and 321–323 (GIV) contribute to the substrate site.

Belongs to the succinate/malate CoA ligase beta subunit family. In terms of assembly, heterotetramer of two alpha and two beta subunits. Mg(2+) is required as a cofactor.

It catalyses the reaction succinate + ATP + CoA = succinyl-CoA + ADP + phosphate. It carries out the reaction GTP + succinate + CoA = succinyl-CoA + GDP + phosphate. Its pathway is carbohydrate metabolism; tricarboxylic acid cycle; succinate from succinyl-CoA (ligase route): step 1/1. In terms of biological role, succinyl-CoA synthetase functions in the citric acid cycle (TCA), coupling the hydrolysis of succinyl-CoA to the synthesis of either ATP or GTP and thus represents the only step of substrate-level phosphorylation in the TCA. The beta subunit provides nucleotide specificity of the enzyme and binds the substrate succinate, while the binding sites for coenzyme A and phosphate are found in the alpha subunit. The protein is Succinate--CoA ligase [ADP-forming] subunit beta of Shewanella baltica (strain OS195).